Reading from the N-terminus, the 337-residue chain is Glyceraldehyde-3-phosphate dehydrogenase (337 aa).

NAD(+)-binding positions include 13–14 (RI), Asp-35, and Arg-80. D-glyceraldehyde 3-phosphate is bound by residues 151-153 (SCT), Thr-182, 211-212 (TG), and Arg-234. The Nucleophile role is filled by Cys-152. Residue Asn-316 participates in NAD(+) binding.

The protein belongs to the glyceraldehyde-3-phosphate dehydrogenase family. Homotetramer.

It localises to the cytoplasm. It catalyses the reaction D-glyceraldehyde 3-phosphate + phosphate + NAD(+) = (2R)-3-phospho-glyceroyl phosphate + NADH + H(+). Its pathway is carbohydrate degradation; glycolysis; pyruvate from D-glyceraldehyde 3-phosphate: step 1/5. The polypeptide is Glyceraldehyde-3-phosphate dehydrogenase (GPD1) (Monascus purpureus (Red mold)).